Consider the following 505-residue polypeptide: 2,3-bisphosphoglycerate-independent phosphoglycerate mutase (505 aa).

Mn(2+) contacts are provided by Asp11 and Ser61. Ser61 (phosphoserine intermediate) is an active-site residue. Residues His122, 152–153 (RD), Arg184, Arg190, 258–261 (RPDR), and Lys331 contribute to the substrate site. Positions 396, 400, 437, 438, and 455 each coordinate Mn(2+).

This sequence belongs to the BPG-independent phosphoglycerate mutase family. As to quaternary structure, monomer. Requires Mn(2+) as cofactor.

It catalyses the reaction (2R)-2-phosphoglycerate = (2R)-3-phosphoglycerate. It participates in carbohydrate degradation; glycolysis; pyruvate from D-glyceraldehyde 3-phosphate: step 3/5. Catalyzes the interconversion of 2-phosphoglycerate and 3-phosphoglycerate. The sequence is that of 2,3-bisphosphoglycerate-independent phosphoglycerate mutase from Mesomycoplasma hyopneumoniae (strain 7448) (Mycoplasma hyopneumoniae).